An 897-amino-acid chain; its full sequence is Leucine--tRNA ligase (897 aa).

A 'HIGH' region motif is present at residues 42 to 52; the sequence is PYPSGKLHMGH. A 'KMSKS' region motif is present at residues 645–649; the sequence is TMSKS. Lys648 provides a ligand contact to ATP.

This sequence belongs to the class-I aminoacyl-tRNA synthetase family.

It localises to the cytoplasm. It catalyses the reaction tRNA(Leu) + L-leucine + ATP = L-leucyl-tRNA(Leu) + AMP + diphosphate. This chain is Leucine--tRNA ligase, found in Paracidovorax citrulli (strain AAC00-1) (Acidovorax citrulli).